Here is a 360-residue protein sequence, read N- to C-terminus: MKKYKALHFGAGNIGRGLISDIYMKNNMDFALVDIDKDLIEKLNKQKSYSIIDFQTNKVFQISNFKAFSIDQEDEIKKWIEQADFISTSIGWSNLASLKKFFENVKLKEKAQIICFENGYKISSFFQSILNIDSNHFVNASVDKIIPNFKSDSLDVYVESYYEIILEQKNESQKKLNFVNYSTDLEAYINKKLFLVNAIHSTIGYLGYLKKYTYINEALNDQQILFKIKRLAKIINEILSKEYLLFKVDYLNDYLEKNLKRFSIKENQDLISRVARNPIQKLSKNERYFLIYNLVKKHNLEIDILLEIYKSIFYYDNKMDKESSKIQSTIENKSLAYALKKFSNLDQEDQEKILKSLAKK.

6 to 17 (ALHFGAGNIGRG) is a binding site for NAD(+).

It belongs to the mannitol dehydrogenase family.

The catalysed reaction is D-mannitol 1-phosphate + NAD(+) = beta-D-fructose 6-phosphate + NADH + H(+). The protein is Mannitol-1-phosphate 5-dehydrogenase of Mycoplasmopsis pulmonis (strain UAB CTIP) (Mycoplasma pulmonis).